The primary structure comprises 198 residues: Recombination protein RecR (198 aa).

A C4-type zinc finger spans residues 57–72; it reads CSICGNITEEDPCEIC. The Toprim domain maps to 80–175; it reads SIILVVEEPK…TVTRLAHGLS (96 aa).

Belongs to the RecR family.

In terms of biological role, may play a role in DNA repair. It seems to be involved in an RecBC-independent recombinational process of DNA repair. It may act with RecF and RecO. This is Recombination protein RecR from Enterococcus faecalis (strain ATCC 700802 / V583).